Consider the following 327-residue polypeptide: MAPLITNIYTADPSAHVFNGKLYIYPSHDRETDIQFNDNGDQYDMADYHVFSLDSLDPPSEVTDHGVVLKVEDIPWVSKQLWAPDAATKDGKYYLYFPARDKEGIFRIGVAVSDKPEGPFTPDPEPIKGSYSIDPAVFVDDDGSAYMYFGGLWGGQLQCYQKGNNIFDAEWSGPKEPSGSGAKALGPRVAKLTDDMRQFAEEVREIVILAPETGEPLAADDHDRRFFEAAWMHKYNGKYYFSYSTGDTHYLVYAVGDSPYGPFTYGGRILEPVLGWTTHHSIVEFQGRWWLFHHDCELSKGVDHLRSVKVKEIWYDKDGKIVTEKPE.

The Proton acceptor role is filled by aspartate 12. Glutamate 228 serves as the catalytic Proton donor.

Belongs to the glycosyl hydrolase 43 family.

It is found in the secreted. The catalysed reaction is Hydrolysis of (1-&gt;4)-beta-D-xylans, to remove successive D-xylose residues from the non-reducing termini.. It carries out the reaction Hydrolysis of terminal non-reducing alpha-L-arabinofuranoside residues in alpha-L-arabinosides.. With respect to regulation, activity is inhibited by Ag(+), Li(+), Pb(2+), Cu(2+), Cr(3+), Co(3+), Fe(3+), Ni(2+), Mg(2+), Zn(2+), EDTA and SDS; but not by Mn(2+), Ca(2+) and beta-mercaptoethanol. In terms of biological role, bifunctional beta-xylosidase/alpha-L-arabinosidases with a low level of xylanase activity. Is most active on 4-nitrophenyl beta-D-xylopyranoside (pNPX) (defined as 100%), moderate on p-nitrophenyl-alpha-L-arabinofuranoside (pNPA) (23.7%), and weak on beechwood xylan (15.9%) and birchwood xylan (15.2%). Is able to attack xylooligosacchardies with degrees of polymerisation of 2-5, releasing the amounts of reducing sugars in the order of xylopentose &gt; xylotetraose &gt; xylotriose &gt; xylobiose, i.e. the rate of xylose released from xylooligosacchardies increased with the chain length. No activity is detected in the presence of carboxymethyl cellulose-sodium (CMC-Na), sugar beet arabinan, AZCL-arabinan (debranched), 4-nitrophenyl a-D - galactopyranoside, 2-nitrophenyl beta-D-galactopyranoside, and 4-nitrophenyl alpha-D-glucopyranoside. The polypeptide is Xylosidase/arabinosidase 43A (Humicola insolens (Soft-rot fungus)).